The sequence spans 369 residues: Histidinol-phosphate aminotransferase 2 (369 aa).

At lysine 231 the chain carries N6-(pyridoxal phosphate)lysine.

The protein belongs to the class-II pyridoxal-phosphate-dependent aminotransferase family. Histidinol-phosphate aminotransferase subfamily. As to quaternary structure, homodimer. Pyridoxal 5'-phosphate serves as cofactor.

It carries out the reaction L-histidinol phosphate + 2-oxoglutarate = 3-(imidazol-4-yl)-2-oxopropyl phosphate + L-glutamate. It participates in amino-acid biosynthesis; L-histidine biosynthesis; L-histidine from 5-phospho-alpha-D-ribose 1-diphosphate: step 7/9. The chain is Histidinol-phosphate aminotransferase 2 from Legionella pneumophila (strain Paris).